The following is a 74-amino-acid chain: Large ribosomal subunit protein bL31 (74 aa).

It belongs to the bacterial ribosomal protein bL31 family. Type A subfamily. Part of the 50S ribosomal subunit.

Binds the 23S rRNA. The protein is Large ribosomal subunit protein bL31 of Phenylobacterium zucineum (strain HLK1).